A 485-amino-acid polypeptide reads, in one-letter code: Palmitoyltransferase ZDHHC1 (485 aa).

The segment at 1-41 is disordered; it reads MYKMNICNKPSNKTAPEKSVWTAPAQPSGPSPELQGQRSRR. Topologically, residues 1–52 are cytoplasmic; sequence MYKMNICNKPSNKTAPEKSVWTAPAQPSGPSPELQGQRSRRNGWSWPPHPLQ. The segment at 1–271 is mediates interaction with STING1; it reads MYKMNICNKP…GHLLCFHIYL (271 aa). A helical membrane pass occupies residues 53-73; the sequence is IVAWLLYLFFAVIGFGILVPL. Residues 74–77 lie on the Lumenal side of the membrane; the sequence is LPHH. The chain crosses the membrane as a helical span at residues 78 to 98; the sequence is WVPAGYACMGAIFAGHLVVHL. Residues 99 to 185 are Cytoplasmic-facing; sequence TAVSIDPADA…YRLFLHSVAS (87 aa). The DHHC domain maps to 134–184; the sequence is LHCNLCNVDVSARSKHCSACNKCVCGFDHHCKWLNNCVGERNYRLFLHSVA. The active-site S-palmitoyl cysteine intermediate is Cys164. Residues 186–206 form a helical membrane-spanning segment; sequence ALLGVLLLVLVATYVFVEFFV. At 207 to 241 the chain is on the lumenal side; that stretch reads NPMRLRTNRHFEVLKNHTDVWFVFLPAAPVETQAP. Residues 242–262 traverse the membrane as a helical segment; the sequence is AILALAALLILLGLLSTALLG. Residues 263-485 lie on the Cytoplasmic side of the membrane; it reads HLLCFHIYLM…RGRRVRPPFS (223 aa). Disordered regions lie at residues 324–358 and 462–485; these read EPPGQAGPAAVNAKHSRPASPDPTPGRRDCAGPPV and LWPPRGAGADSPRWRGRRVRPPFS. The span at 475-485 shows a compositional bias: basic residues; that stretch reads WRGRRVRPPFS.

This sequence belongs to the DHHC palmitoyltransferase family. Interacts with STING1; ZDHHC1 constitutively interacts with STING1 and in presence of DNA viruses activates it by promoting its cGAMP-induced oligomerization and the recruitment of downstream signaling components. In terms of tissue distribution, widely expressed with significant expression in heart, brain, placenta, lung, liver, kidney, testis, thymus and small intestine. Expressed at lower levels in adult pancreas and lung.

The protein localises to the endosome membrane. The protein resides in the endoplasmic reticulum membrane. It is found in the golgi apparatus. It catalyses the reaction L-cysteinyl-[protein] + hexadecanoyl-CoA = S-hexadecanoyl-L-cysteinyl-[protein] + CoA. Functionally, palmitoyltransferase that catalyzes the addition of palmitate onto various protein substrates, such as NCDN and NLRP3. Has a palmitoyltransferase activity toward NCDN and regulates NCDN association with endosome membranes through this palmitoylation. Acts as an activator of the NLRP3 inflammasome by mediating palmitoylation of 'Cys-130' and 'Cys-958' of NLRP3, thereby promoting NLRP3 phosphorylation and activation by NEK7. In terms of biological role, also has a palmitoyltransferase activity-independent function in DNA virus-triggered and CGAS-mediated innate immune response. Functions as an activator of STING1 by promoting its cGAMP-induced oligomerization and the recruitment of downstream signaling components. This Homo sapiens (Human) protein is Palmitoyltransferase ZDHHC1.